The sequence spans 398 residues: Glucose-1-phosphate adenylyltransferase (398 aa).

Residues tyrosine 100, glycine 165, 180–181 (EK), and serine 191 contribute to the alpha-D-glucose 1-phosphate site.

Belongs to the bacterial/plant glucose-1-phosphate adenylyltransferase family. As to quaternary structure, homotetramer.

It catalyses the reaction alpha-D-glucose 1-phosphate + ATP + H(+) = ADP-alpha-D-glucose + diphosphate. The protein operates within glycan biosynthesis; glycogen biosynthesis. Involved in the biosynthesis of ADP-glucose, a building block required for the elongation reactions to produce glycogen. Catalyzes the reaction between ATP and alpha-D-glucose 1-phosphate (G1P) to produce pyrophosphate and ADP-Glc. The sequence is that of Glucose-1-phosphate adenylyltransferase from Desulfitobacterium hafniense (strain Y51).